The chain runs to 120 residues: NAD(P)H-quinone oxidoreductase subunit 3, chloroplastic (120 aa).

The next 3 membrane-spanning stretches (helical) occupy residues L14–I34, M64–M84, and I88–L108.

The protein belongs to the complex I subunit 3 family. As to quaternary structure, NDH is composed of at least 16 different subunits, 5 of which are encoded in the nucleus.

It localises to the plastid. It is found in the chloroplast thylakoid membrane. It carries out the reaction a plastoquinone + NADH + (n+1) H(+)(in) = a plastoquinol + NAD(+) + n H(+)(out). The catalysed reaction is a plastoquinone + NADPH + (n+1) H(+)(in) = a plastoquinol + NADP(+) + n H(+)(out). NDH shuttles electrons from NAD(P)H:plastoquinone, via FMN and iron-sulfur (Fe-S) centers, to quinones in the photosynthetic chain and possibly in a chloroplast respiratory chain. The immediate electron acceptor for the enzyme in this species is believed to be plastoquinone. Couples the redox reaction to proton translocation, and thus conserves the redox energy in a proton gradient. The chain is NAD(P)H-quinone oxidoreductase subunit 3, chloroplastic from Coffea arabica (Arabian coffee).